We begin with the raw amino-acid sequence, 573 residues long: Potassium-transporting ATPase potassium-binding subunit (573 aa).

The next 10 helical transmembrane spans lie at 6-26 (ILFA…GSYI), 66-86 (FFSL…ILLL), 135-155 (ALAV…IALI), 177-197 (VFWI…FQGV), 257-277 (IQMV…GKWV), 283-303 (GWLI…VMTI), 382-402 (IFGG…LAVF), 428-448 (MFAL…AAVI), 493-513 (ITIA…VIML), and 537-557 (FIFA…TIFP).

This sequence belongs to the KdpA family. In terms of assembly, the system is composed of three essential subunits: KdpA, KdpB and KdpC.

It localises to the cell inner membrane. Its function is as follows. Part of the high-affinity ATP-driven potassium transport (or Kdp) system, which catalyzes the hydrolysis of ATP coupled with the electrogenic transport of potassium into the cytoplasm. This subunit binds the periplasmic potassium ions and delivers the ions to the membrane domain of KdpB through an intramembrane tunnel. This Francisella tularensis subsp. mediasiatica (strain FSC147) protein is Potassium-transporting ATPase potassium-binding subunit.